We begin with the raw amino-acid sequence, 398 residues long: Probable peptidoglycan glycosyltransferase FtsW (398 aa).

The Cytoplasmic segment spans residues 1 to 20 (MSTQAIRGARGLVLKWGAGR). The helical transmembrane segment at 21–41 (FYLDTVLLSVSLGLMLFGFVM) threads the bilayer. The Periplasmic portion of the chain corresponds to 42 to 57 (VSSASLHLGEKMASDS). The helical transmembrane segment at 58–78 (FYFPKHQLVHILLGLAAGWGA) threads the bilayer. The Cytoplasmic segment spans residues 79–92 (ARVRLDTLERHSRS). A helical transmembrane segment spans residues 93–113 (LFWAGIALLVLVLIPGVGKSV). Residues 114–121 (NGSVRWIN) lie on the Periplasmic side of the membrane. A helical membrane pass occupies residues 122–142 (LFGLRVQVSEVFKLVAAIYVA). Residues 143 to 153 (GYISRHLDTVR) lie on the Cytoplasmic side of the membrane. The helical transmembrane segment at 154–174 (TSVKGMIFPLSLLAIGAVLLL) threads the bilayer. Topologically, residues 175–177 (KEP) are periplasmic. The chain crosses the membrane as a helical span at residues 178–198 (DFGATAVVMATALGMLFLAGA). Position 199 (arginine 199) is a topological domain, cytoplasmic. The helical transmembrane segment at 200 to 220 (LWVFVGLLGLVAVAGTVLIYT) threads the bilayer. Residues 221–289 (AEYRLRRVLS…LFSVIGEELG (69 aa)) lie on the Periplasmic side of the membrane. The chain crosses the membrane as a helical span at residues 290-310 (LWGATTVILLFAIVVWRALAI). At 311–318 (GRLAERSG) the chain is on the cytoplasmic side. A helical transmembrane segment spans residues 319–339 (NLFAAFLAYGIGIWLGLQSFI). At 340–355 (NMGVNMGMLPTKGLTL) the chain is on the periplasmic side. The chain crosses the membrane as a helical span at residues 356–376 (PLMSYGGGSMMVVCAAIGLLF). The Cytoplasmic portion of the chain corresponds to 377-398 (RIRSEAVASFLGNGRKGLWPGV).

It belongs to the SEDS family. FtsW subfamily.

The protein resides in the cell inner membrane. The enzyme catalyses [GlcNAc-(1-&gt;4)-Mur2Ac(oyl-L-Ala-gamma-D-Glu-L-Lys-D-Ala-D-Ala)](n)-di-trans,octa-cis-undecaprenyl diphosphate + beta-D-GlcNAc-(1-&gt;4)-Mur2Ac(oyl-L-Ala-gamma-D-Glu-L-Lys-D-Ala-D-Ala)-di-trans,octa-cis-undecaprenyl diphosphate = [GlcNAc-(1-&gt;4)-Mur2Ac(oyl-L-Ala-gamma-D-Glu-L-Lys-D-Ala-D-Ala)](n+1)-di-trans,octa-cis-undecaprenyl diphosphate + di-trans,octa-cis-undecaprenyl diphosphate + H(+). It participates in cell wall biogenesis; peptidoglycan biosynthesis. In terms of biological role, peptidoglycan polymerase that is essential for cell division. This is Probable peptidoglycan glycosyltransferase FtsW from Methylococcus capsulatus (strain ATCC 33009 / NCIMB 11132 / Bath).